We begin with the raw amino-acid sequence, 320 residues long: MLYKRNPQLNKNGELIHLLSIEGLPKDIVTHILDTATNFVSVQEREVKKVPLLRGKSVFNLFFENSTRTRTTFEIAAKRLSADVFNLDIARSSTAKGETLLDTIDNLSAMAADIFVVRHSESGAPYLIAQHVAPHVHVVNAGDGRHSHPTQGLLDMYTIRHYKKDFSNLTVAIVGDVLHSRVARSDIHALTTLGAAEVRVVGPRTLVPSDMAQMGVRVFHNLEEGIKGCDVVITLRLQNERMSGALLPSSQEYFKSFGLTPEKLRLAKPDAIVMHPGPINRGVEIDSAVVDGPQAVILPQVTFGIAVRMAVMSIVAGNEA.

Carbamoyl phosphate-binding residues include Arg68 and Thr69. Residue Lys96 coordinates L-aspartate. Residues Arg118, His148, and Gln151 each contribute to the carbamoyl phosphate site. Residues Arg181 and Arg236 each contribute to the L-aspartate site. Carbamoyl phosphate-binding residues include Gly277 and Pro278.

This sequence belongs to the aspartate/ornithine carbamoyltransferase superfamily. ATCase family. In terms of assembly, heterododecamer (2C3:3R2) of six catalytic PyrB chains organized as two trimers (C3), and six regulatory PyrI chains organized as three dimers (R2).

It carries out the reaction carbamoyl phosphate + L-aspartate = N-carbamoyl-L-aspartate + phosphate + H(+). Its pathway is pyrimidine metabolism; UMP biosynthesis via de novo pathway; (S)-dihydroorotate from bicarbonate: step 2/3. Its function is as follows. Catalyzes the condensation of carbamoyl phosphate and aspartate to form carbamoyl aspartate and inorganic phosphate, the committed step in the de novo pyrimidine nucleotide biosynthesis pathway. This is Aspartate carbamoyltransferase catalytic subunit from Acidovorax ebreus (strain TPSY) (Diaphorobacter sp. (strain TPSY)).